Consider the following 48-residue polypeptide: Large ribosomal subunit protein bL33A (48 aa).

It belongs to the bacterial ribosomal protein bL33 family.

This chain is Large ribosomal subunit protein bL33A, found in Bacillus mycoides (strain KBAB4) (Bacillus weihenstephanensis).